The sequence spans 713 residues: Protein-glucosylgalactosylhydroxylysine glucosidase (713 aa).

An N-terminal signal peptide occupies residues 1-21 (MIINSQEYLQPPQWWNERVEA). N104, N160, N171, N186, and N283 each carry an N-linked (GlcNAc...) asparagine glycan. 317-318 (WD) provides a ligand contact to substrate. N361 is a glycosylation site (N-linked (GlcNAc...) asparagine). The Proton donor role is filled by E451. N-linked (GlcNAc...) asparagine glycosylation is found at N457 and N481. 521-522 (KQ) serves as a coordination point for substrate. Residues N535, N576, and N662 are each glycosylated (N-linked (GlcNAc...) asparagine).

Belongs to the glycosyl hydrolase 65 family.

It localises to the secreted. It carries out the reaction (5R)-5-O-[alpha-D-glucosyl-(1-&gt;2)-beta-D-galactosyl]-5-hydroxy-L-lysyl-[collagen] + H2O = (5R)-5-O-(beta-D-galactosyl)-5-hydroxy-L-lysyl-[collagen] + D-glucose. Functionally, catalyzes the hydrolysis of glucose from the disaccharide unit linked to hydroxylysine residues of collagen and collagen-like proteins. The protein is Protein-glucosylgalactosylhydroxylysine glucosidase of Dictyostelium discoideum (Social amoeba).